We begin with the raw amino-acid sequence, 648 residues long: Chaperone protein DnaK (648 aa).

A Phosphothreonine; by autocatalysis modification is found at Thr200. The interval 612 to 631 (QAGAAGAAGAAEGAAQGGAQ) is disordered.

This sequence belongs to the heat shock protein 70 family.

Its function is as follows. Acts as a chaperone. The sequence is that of Chaperone protein DnaK from Burkholderia multivorans (strain ATCC 17616 / 249).